Here is a 285-residue protein sequence, read N- to C-terminus: Acetylglutamate kinase (285 aa).

Substrate is bound by residues 55–56 (GG), R77, and N171.

The protein belongs to the acetylglutamate kinase family. ArgB subfamily.

Its subcellular location is the cytoplasm. It catalyses the reaction N-acetyl-L-glutamate + ATP = N-acetyl-L-glutamyl 5-phosphate + ADP. Its pathway is amino-acid biosynthesis; L-arginine biosynthesis; N(2)-acetyl-L-ornithine from L-glutamate: step 2/4. Its function is as follows. Catalyzes the ATP-dependent phosphorylation of N-acetyl-L-glutamate. The polypeptide is Acetylglutamate kinase (Chlorobaculum tepidum (strain ATCC 49652 / DSM 12025 / NBRC 103806 / TLS) (Chlorobium tepidum)).